An 82-amino-acid chain; its full sequence is Immediate early response 3-interacting protein 1 (82 aa).

Helical transmembrane passes span 2–22 (AFTL…IAVL) and 62–82 (VMRV…LLFG).

Belongs to the YOS1 family.

It localises to the endoplasmic reticulum membrane. Regulator of endoplasmic reticulum secretion that acts as a key determinant of brain size. Required for secretion of extracellular matrix proteins. Required for correct brain development by depositing sufficient extracellular matrix proteins for tissue integrity and the proliferation of neural progenitors. Acts as a regulator of the unfolded protein response (UPR). This chain is Immediate early response 3-interacting protein 1, found in Mus musculus (Mouse).